The sequence spans 1092 residues: Fibrinogen-binding protein (1092 aa).

An N-terminal signal peptide occupies residues 1 to 51 (MINKKNNLLTKKKPIANKSNKYAIRKFTVGTASIVIGATLLFGLGHNEAKA). Positions 50 to 63 (KAEENSVQDVKDSN) are enriched in basic and acidic residues. A disordered region spans residues 50 to 236 (KAEENSVQDV…GYTNIDEKIS (187 aa)). A ligand binding A region region spans residues 52-599 (EENSVQDVKD…GQGQGDLPPE (548 aa)). A compositionally biased stretch (acidic residues) spans 64–76 (TDDELSDSNDQSS). Low complexity predominate over residues 84–98 (INNNQSINTDDNNQI). Basic and acidic residues predominate over residues 99-119 (IKKEETNNYDGIEKRSEDRTE). A compositionally biased stretch (polar residues) spans 120–140 (STTNVDENEATFLQKTPQDNT). The span at 141–151 (HLTEEEVKESS) shows a compositional bias: basic and acidic residues. Polar residues predominate over residues 160–170 (IDTAQQPSHTT). Basic and acidic residues predominate over residues 195-220 (KIKESNTESGKEENTIEQPNKVKEDS). The Ca(2+) site is built by Glu294, Ser299, Val302, and Glu309. The interaction with human fibrinogen stretch occupies residues 579 to 590 (YDNTIAFSTSSG). 2 consecutive CNA-B domains span residues 600 to 713 (KTYK…YQTP) and 714 to 824 (KYSL…YDDE). Residues 780-1068 (KPSGMTQTTT…NEDYGSKGTL (289 aa)) form a disordered region. Residues 791-801 (SGDDDEQDADG) show a composition bias toward acidic residues. Basic and acidic residues predominate over residues 802–814 (EEVHVTITDHDDF). The span at 820 to 1039 (YYDDESDSDS…DSDSDSDNDS (220 aa)) shows a compositional bias: acidic residues. Positions 1053–1057 (LPDTG) match the LPXTG sorting signal motif. Position 1056 is a pentaglycyl murein peptidoglycan amidated threonine (Thr1056). Positions 1057 to 1092 (GANEDYGSKGTLLGTLFAGLGALLLGKRRKNRKNKN) are cleaved as a propeptide — removed by sortase.

Belongs to the serine-aspartate repeat-containing protein (SDr) family.

The protein resides in the secreted. Its subcellular location is the cell wall. Promotes bacterial attachment to both soluble and immobilized forms of fibrinogen in a dose-dependent manner. This binding occurs through the beta-chain of human fibrinogen. Could contribute to the initiation of foreign-body infection by allowing bacteria to adhere to biomaterial surfaces that have become coated with host proteins after implantation. Is important in the pathogenesis of central venous catheter (CVC)-associated infection model. This chain is Fibrinogen-binding protein (fbe), found in Staphylococcus epidermidis.